We begin with the raw amino-acid sequence, 359 residues long: Putative B3 domain-containing protein At3g24850 (359 aa).

Disordered stretches follow at residues 92–111 (DSEI…LQNS) and 159–192 (EKME…KRTG). Over residues 100–111 (TSDSQMKTLQNS) the composition is skewed to polar residues. Residues 250-351 (FNNLLQNDFL…VLCFAMEQSS (102 aa)) constitute a DNA-binding region (TF-B3).

It is found in the nucleus. In Arabidopsis thaliana (Mouse-ear cress), this protein is Putative B3 domain-containing protein At3g24850.